Here is a 124-residue protein sequence, read N- to C-terminus: Large ribosomal subunit protein bL12 (124 aa).

This sequence belongs to the bacterial ribosomal protein bL12 family. Homodimer. Part of the ribosomal stalk of the 50S ribosomal subunit. Forms a multimeric L10(L12)X complex, where L10 forms an elongated spine to which 2 to 4 L12 dimers bind in a sequential fashion. Binds GTP-bound translation factors.

Forms part of the ribosomal stalk which helps the ribosome interact with GTP-bound translation factors. Is thus essential for accurate translation. In Campylobacter fetus subsp. fetus (strain 82-40), this protein is Large ribosomal subunit protein bL12.